Reading from the N-terminus, the 190-residue chain is Shikimate kinase (190 aa).

An ATP-binding site is contributed by 14 to 19 (GAGKST). Ser-18 is a Mg(2+) binding site. Substrate is bound by residues Asp-36, Arg-60, and Gly-82. Arg-120 provides a ligand contact to ATP. Position 139 (Arg-139) interacts with substrate.

This sequence belongs to the shikimate kinase family. As to quaternary structure, monomer. Requires Mg(2+) as cofactor.

It is found in the cytoplasm. The catalysed reaction is shikimate + ATP = 3-phosphoshikimate + ADP + H(+). The protein operates within metabolic intermediate biosynthesis; chorismate biosynthesis; chorismate from D-erythrose 4-phosphate and phosphoenolpyruvate: step 5/7. Functionally, catalyzes the specific phosphorylation of the 3-hydroxyl group of shikimic acid using ATP as a cosubstrate. This is Shikimate kinase from Thioalkalivibrio sulfidiphilus (strain HL-EbGR7).